The following is a 520-amino-acid chain: 5'-nucleotidase domain-containing protein 2 (520 aa).

D73 functions as the Nucleophile in the catalytic mechanism. Residues D73, D75, and D358 each coordinate Mg(2+). D75 serves as the catalytic Proton donor.

The protein belongs to the 5'(3')-deoxyribonucleotidase family. Interacts with tyrosine 3-monooxygenase TH; the interaction results in reduced phosphorylation and decreased catalytic activity of TH.

It is found in the cytoplasm. In terms of biological role, promotes dephosphorylation of tyrosine 3-monooxygenase TH which decreases TH catalytic activity and leads to reduced synthesis of catecholamines including dopamine, noradrenaline and adrenaline. The exact mechanism of activity is unknown but may act as a phosphatase or promote the activity of phosphatases or may inhibit phosphorylation by acting as a barrier to interfere with protein kinase access. The protein is 5'-nucleotidase domain-containing protein 2 (NT5DC2) of Homo sapiens (Human).